We begin with the raw amino-acid sequence, 178 residues long: ATP synthase subunit delta (178 aa).

Belongs to the ATPase delta chain family. As to quaternary structure, F-type ATPases have 2 components, F(1) - the catalytic core - and F(0) - the membrane proton channel. F(1) has five subunits: alpha(3), beta(3), gamma(1), delta(1), epsilon(1). F(0) has three main subunits: a(1), b(2) and c(10-14). The alpha and beta chains form an alternating ring which encloses part of the gamma chain. F(1) is attached to F(0) by a central stalk formed by the gamma and epsilon chains, while a peripheral stalk is formed by the delta and b chains.

Its subcellular location is the cell membrane. Functionally, f(1)F(0) ATP synthase produces ATP from ADP in the presence of a proton or sodium gradient. F-type ATPases consist of two structural domains, F(1) containing the extramembraneous catalytic core and F(0) containing the membrane proton channel, linked together by a central stalk and a peripheral stalk. During catalysis, ATP synthesis in the catalytic domain of F(1) is coupled via a rotary mechanism of the central stalk subunits to proton translocation. Its function is as follows. This protein is part of the stalk that links CF(0) to CF(1). It either transmits conformational changes from CF(0) to CF(1) or is implicated in proton conduction. This is ATP synthase subunit delta from Streptococcus gordonii (strain Challis / ATCC 35105 / BCRC 15272 / CH1 / DL1 / V288).